The primary structure comprises 161 residues: Myosin regulatory light chain (161 aa).

2 positions are modified to phosphoserine: serine 13 and serine 14. EF-hand domains follow at residues 20 to 55 (EQVA…FGVF), 56 to 91 (VMED…RMKQ), and 93 to 128 (SNEQ…LGDK).

As to quaternary structure, myosin is a hexamer of 2 heavy chains and 4 light chains (two regulatory light chains and two essential light chains).

This Dictyostelium discoideum (Social amoeba) protein is Myosin regulatory light chain (mlcR).